A 273-amino-acid chain; its full sequence is Rhamnulose-1-phosphate aldolase (273 aa).

Glu117 is an active-site residue. The Zn(2+) site is built by His140, His142, and His211.

This sequence belongs to the aldolase class II family. RhaD subfamily. Zn(2+) is required as a cofactor.

Its subcellular location is the cytoplasm. It catalyses the reaction L-rhamnulose 1-phosphate = (S)-lactaldehyde + dihydroxyacetone phosphate. It participates in carbohydrate degradation; L-rhamnose degradation; glycerone phosphate from L-rhamnose: step 3/3. Functionally, catalyzes the reversible cleavage of L-rhamnulose-1-phosphate to dihydroxyacetone phosphate (DHAP) and L-lactaldehyde. This chain is Rhamnulose-1-phosphate aldolase, found in Listeria monocytogenes serotype 4b (strain CLIP80459).